Reading from the N-terminus, the 327-residue chain is Lipoyl synthase (327 aa).

[4Fe-4S] cluster contacts are provided by Cys-75, Cys-80, Cys-86, Cys-101, Cys-105, Cys-108, and Ser-315. The region spanning 87-304 is the Radical SAM core domain; that stretch reads FGNGTATFMI…EEEAYKMGFS (218 aa).

This sequence belongs to the radical SAM superfamily. Lipoyl synthase family. The cofactor is [4Fe-4S] cluster.

Its subcellular location is the cytoplasm. The catalysed reaction is [[Fe-S] cluster scaffold protein carrying a second [4Fe-4S](2+) cluster] + N(6)-octanoyl-L-lysyl-[protein] + 2 oxidized [2Fe-2S]-[ferredoxin] + 2 S-adenosyl-L-methionine + 4 H(+) = [[Fe-S] cluster scaffold protein] + N(6)-[(R)-dihydrolipoyl]-L-lysyl-[protein] + 4 Fe(3+) + 2 hydrogen sulfide + 2 5'-deoxyadenosine + 2 L-methionine + 2 reduced [2Fe-2S]-[ferredoxin]. The protein operates within protein modification; protein lipoylation via endogenous pathway; protein N(6)-(lipoyl)lysine from octanoyl-[acyl-carrier-protein]: step 2/2. Functionally, catalyzes the radical-mediated insertion of two sulfur atoms into the C-6 and C-8 positions of the octanoyl moiety bound to the lipoyl domains of lipoate-dependent enzymes, thereby converting the octanoylated domains into lipoylated derivatives. The polypeptide is Lipoyl synthase (Variovorax paradoxus (strain S110)).